The sequence spans 389 residues: Chalcone synthase 9 (389 aa).

Residue Cys164 is part of the active site.

The protein belongs to the thiolase-like superfamily. Chalcone/stilbene synthases family.

It carries out the reaction (E)-4-coumaroyl-CoA + 3 malonyl-CoA + 3 H(+) = 2',4,4',6'-tetrahydroxychalcone + 3 CO2 + 4 CoA. It functions in the pathway secondary metabolite biosynthesis; flavonoid biosynthesis. Its function is as follows. The primary product of this enzyme is 4,2',4',6'-tetrahydroxychalcone (also termed naringenin-chalcone or chalcone) which can under specific conditions spontaneously isomerize into naringenin. In Daucus carota (Wild carrot), this protein is Chalcone synthase 9 (CHS9).